Consider the following 232-residue polypeptide: Ribonuclease 3 (232 aa).

Residues 5 to 134 enclose the RNase III domain; sequence QTVLKNHFAI…FLGALLLDKD (130 aa). Mg(2+) is bound at residue E47. Residue D51 is part of the active site. Mg(2+) contacts are provided by D120 and E123. Residue E123 is part of the active site. One can recognise a DRBM domain in the interval 160-229; that stretch reads DYKTHLQELL…AKNAVEKGLD (70 aa).

Belongs to the ribonuclease III family. In terms of assembly, homodimer. It depends on Mg(2+) as a cofactor.

It localises to the cytoplasm. It carries out the reaction Endonucleolytic cleavage to 5'-phosphomonoester.. Digests double-stranded RNA. Involved in the processing of primary rRNA transcript to yield the immediate precursors to the large and small rRNAs (23S and 16S). Processes some mRNAs, and tRNAs when they are encoded in the rRNA operon. Processes pre-crRNA and tracrRNA of type II CRISPR loci if present in the organism. The protein is Ribonuclease 3 of Streptococcus pneumoniae (strain P1031).